The primary structure comprises 203 residues: uncharacterized protein (203 aa).

A helical transmembrane segment spans residues 180 to 200 (VYLLLFGIPLLILIFLIIFFI).

The protein localises to the virion. It localises to the host membrane. This is an uncharacterized protein from Acanthamoeba polyphaga (Amoeba).